The primary structure comprises 1307 residues: Light-sensor Protein kinase (1307 aa).

In terms of domain architecture, GAF spans 215 to 394; it reads DIELLCDTIV…VFGMQLNLHV (180 aa). Residue Cys320 participates in phytochromobilin binding. The 72-residue stretch at 609–680 folds into the PAS domain; sequence LANEMSRVLE…RLLSLALQGE (72 aa). The region spanning 683–739 is the PAC domain; that stretch reads QNVEIKLKTFGTQTTERAVILIVNACCSRDASDFVVGVFFVGQDVTEQRMFMDRFTR. The tract at residues 779 to 1003 is hinge; that stretch reads DHATGSVERL…WSFSEKFFQW (225 aa). The Protein kinase domain occupies 1004–1307; that stretch reads IQITGSLGSG…DSYPSTEEPS (304 aa). Residues 1010–1018 and Lys1031 each bind ATP; that span reads LGSGSSATV. Asp1127 is an active-site residue.

The protein in the N-terminal section; belongs to the phytochrome family. This sequence in the C-terminal section; belongs to the protein kinase superfamily. Ser/Thr protein kinase family. Homodimer. Contains one covalently linked phytochromobilin chromophore.

Its subcellular location is the cell membrane. It carries out the reaction L-seryl-[protein] + ATP = O-phospho-L-seryl-[protein] + ADP + H(+). It catalyses the reaction L-threonyl-[protein] + ATP = O-phospho-L-threonyl-[protein] + ADP + H(+). Its function is as follows. Regulatory photoreceptor which exists in two forms that are reversibly interconvertible by light: the Pr form that absorbs maximally in the red region of the spectrum and the Pfr form that absorbs maximally in the far-red region. Photoconversion of Pr to Pfr induces an array of morphogenic responses, whereas reconversion of Pfr to Pr cancels the induction of those responses. Pfr controls the expression of a number of nuclear genes including those encoding the small subunit of ribulose-bisphosphate carboxylase, chlorophyll A/B binding protein, protochlorophyllide reductase, rRNA, etc. It also controls the expression of its own gene(s) in a negative feedback fashion. This is Light-sensor Protein kinase (PHY1) from Ceratodon purpureus (Fire moss).